The sequence spans 282 residues: Bifunctional protein FolD (282 aa).

Residues 165 to 167, S190, and T231 each bind NADP(+); that span reads GRS.

The protein belongs to the tetrahydrofolate dehydrogenase/cyclohydrolase family. In terms of assembly, homodimer.

It carries out the reaction (6R)-5,10-methylene-5,6,7,8-tetrahydrofolate + NADP(+) = (6R)-5,10-methenyltetrahydrofolate + NADPH. The catalysed reaction is (6R)-5,10-methenyltetrahydrofolate + H2O = (6R)-10-formyltetrahydrofolate + H(+). Its pathway is one-carbon metabolism; tetrahydrofolate interconversion. Catalyzes the oxidation of 5,10-methylenetetrahydrofolate to 5,10-methenyltetrahydrofolate and then the hydrolysis of 5,10-methenyltetrahydrofolate to 10-formyltetrahydrofolate. The protein is Bifunctional protein FolD of Clostridium beijerinckii (strain ATCC 51743 / NCIMB 8052) (Clostridium acetobutylicum).